Here is a 379-residue protein sequence, read N- to C-terminus: Bifunctional riboflavin kinase/FMN phosphatase (379 aa).

N-acetylserine is present on S2. D17 serves as the catalytic Nucleophile; for FMN phosphatase activity. D17 and D19 together coordinate Mg(2+). The active-site Proton donor; for FMN phosphatase activity is the D19. Residues G248, K254, T260, and N262 each contribute to the ATP site. Residue T260 coordinates Mg(2+). The active-site Nucleophile; for riboflavin kinase activity is E312. ATP contacts are provided by L315, H317, and Y324. FMN is bound by residues R337 and F342.

This sequence in the N-terminal section; belongs to the HAD-like hydrolase superfamily. CbbY/CbbZ/Gph/YieH family. It in the C-terminal section; belongs to the flavokinase family. In terms of assembly, monomer. It depends on Mg(2+) as a cofactor.

The catalysed reaction is riboflavin + ATP = FMN + ADP + H(+). It catalyses the reaction FMN + H2O = riboflavin + phosphate. The protein operates within cofactor biosynthesis; FMN biosynthesis; FMN from riboflavin (ATP route): step 1/1. Bifunctional enzyme that catalyzes the hydrolysis of flavin-mononucleotide (FMN) to riboflavin (vitamin B2) and the phosphorylation of riboflavin to form (FMN) coenzyme. The sequence is that of Bifunctional riboflavin kinase/FMN phosphatase from Arabidopsis thaliana (Mouse-ear cress).